We begin with the raw amino-acid sequence, 375 residues long: Histidine biosynthesis bifunctional protein HisB (375 aa).

A histidinol-phosphatase region spans residues 1–168 (MTPILFVDRD…GIAHELADAP (168 aa)). The Nucleophile role is filled by aspartate 8. Residues aspartate 8, aspartate 10, and aspartate 128 each contribute to the Mg(2+) site. The active-site Proton donor is the aspartate 10. Positions 169-375 (RRAVVQRNTK…TALPSTKGAL (207 aa)) are imidazoleglycerol-phosphate dehydratase.

In the N-terminal section; belongs to the histidinol-phosphatase family. It in the C-terminal section; belongs to the imidazoleglycerol-phosphate dehydratase family. Mg(2+) serves as cofactor.

The protein resides in the cytoplasm. The enzyme catalyses D-erythro-1-(imidazol-4-yl)glycerol 3-phosphate = 3-(imidazol-4-yl)-2-oxopropyl phosphate + H2O. It catalyses the reaction L-histidinol phosphate + H2O = L-histidinol + phosphate. The protein operates within amino-acid biosynthesis; L-histidine biosynthesis; L-histidine from 5-phospho-alpha-D-ribose 1-diphosphate: step 6/9. Its pathway is amino-acid biosynthesis; L-histidine biosynthesis; L-histidine from 5-phospho-alpha-D-ribose 1-diphosphate: step 8/9. In Xanthomonas campestris pv. campestris (strain B100), this protein is Histidine biosynthesis bifunctional protein HisB.